A 356-amino-acid chain; its full sequence is DNA polymerase IV (356 aa).

The UmuC domain occupies 6–187 (IIHIDMDYFF…LDIGDFPGVG (182 aa)). Residues D10 and D105 each contribute to the Mg(2+) site. E106 is a catalytic residue.

Belongs to the DNA polymerase type-Y family. In terms of assembly, monomer. Mg(2+) is required as a cofactor.

It localises to the cytoplasm. It catalyses the reaction DNA(n) + a 2'-deoxyribonucleoside 5'-triphosphate = DNA(n+1) + diphosphate. Functionally, poorly processive, error-prone DNA polymerase involved in untargeted mutagenesis. Copies undamaged DNA at stalled replication forks, which arise in vivo from mismatched or misaligned primer ends. These misaligned primers can be extended by PolIV. Exhibits no 3'-5' exonuclease (proofreading) activity. May be involved in translesional synthesis, in conjunction with the beta clamp from PolIII. The sequence is that of DNA polymerase IV from Staphylococcus aureus (strain Mu50 / ATCC 700699).